We begin with the raw amino-acid sequence, 265 residues long: MKRIAIYGKGGIGKSTIVSNMAAAYSSEHRVLVIGCDPKADTTRTLYGERLPTVLDVLKENREPDVSEVIHTGFGGVRCVESGGPEPGVGCAGRGVIVAMNLLERLGVFREDIDVVIYDVLGDVVCGGFAVPLREDFADEVYIVTSGEYMSLYAANNIARGIRKLKGKLGGVICNCRGIRDEVEIVSEFASRIGSRLIGAVPRSNLVQESELEARTVIERFPESEQASVYRKLAEDIYRNTEFTVPEPMDQEEFEEFFRKFRVEG.

Residue 8 to 15 (GKGGIGKS) participates in ATP binding. Cys91 is a binding site for [4Fe-4S] cluster. At Arg94 the chain carries ADP-ribosylarginine; by dinitrogenase reductase ADP-ribosyltransferase. Cys126 contributes to the [4Fe-4S] cluster binding site.

This sequence belongs to the NifH/BchL/ChlL family. As to quaternary structure, homodimer. [4Fe-4S] cluster is required as a cofactor. In terms of processing, the reversible ADP-ribosylation of Arg-94 inactivates the nitrogenase reductase and regulates nitrogenase activity.

The enzyme catalyses N2 + 8 reduced [2Fe-2S]-[ferredoxin] + 16 ATP + 16 H2O = H2 + 8 oxidized [2Fe-2S]-[ferredoxin] + 2 NH4(+) + 16 ADP + 16 phosphate + 6 H(+). In terms of biological role, the key enzymatic reactions in nitrogen fixation are catalyzed by the nitrogenase complex, which has 2 components: the iron protein and the molybdenum-iron protein. The polypeptide is Nitrogenase iron protein 2 (nifH2) (Methanothermobacter thermautotrophicus (strain ATCC 29096 / DSM 1053 / JCM 10044 / NBRC 100330 / Delta H) (Methanobacterium thermoautotrophicum)).